Reading from the N-terminus, the 504-residue chain is Maturase K (504 aa).

It belongs to the intron maturase 2 family. MatK subfamily.

The protein localises to the plastid. It localises to the chloroplast. Usually encoded in the trnK tRNA gene intron. Probably assists in splicing its own and other chloroplast group II introns. This is Maturase K from Lepidium campestre (Field pepperwort).